A 431-amino-acid polypeptide reads, in one-letter code: Glutamate-1-semialdehyde 2,1-aminomutase (431 aa).

N6-(pyridoxal phosphate)lysine is present on lysine 266.

It belongs to the class-III pyridoxal-phosphate-dependent aminotransferase family. HemL subfamily. As to quaternary structure, homodimer. It depends on pyridoxal 5'-phosphate as a cofactor.

The protein resides in the cytoplasm. It carries out the reaction (S)-4-amino-5-oxopentanoate = 5-aminolevulinate. It functions in the pathway porphyrin-containing compound metabolism; protoporphyrin-IX biosynthesis; 5-aminolevulinate from L-glutamyl-tRNA(Glu): step 2/2. The sequence is that of Glutamate-1-semialdehyde 2,1-aminomutase from Wolinella succinogenes (strain ATCC 29543 / DSM 1740 / CCUG 13145 / JCM 31913 / LMG 7466 / NCTC 11488 / FDC 602W) (Vibrio succinogenes).